Here is a 333-residue protein sequence, read N- to C-terminus: Mitochondrial glycine transporter (333 aa).

Solcar repeat units lie at residues 10 to 93 (SKST…IRQS), 125 to 209 (LSNT…GKKR), and 235 to 319 (HAAS…LIRR). 2 helical membrane passes run 16-41 (FAAG…TRVQ) and 68-94 (GAVP…RQSA). Positions 98-126 (SPLPSSSSSTTTSSSTTTSSSSSSLPKLS) are disordered. 4 helical membrane-spanning segments follow: residues 131–156 (LLAG…VRYE), 184–207 (GYGA…EQGK), 239–265 (INFA…KTRI), and 294–312 (GLAL…AWTV).

Belongs to the mitochondrial carrier (TC 2.A.29) family. SLC25A38 subfamily.

It localises to the mitochondrion inner membrane. It catalyses the reaction glycine(in) = glycine(out). Functionally, mitochondrial glycine transporter that imports glycine into the mitochondrial matrix. Plays an important role in providing glycine for the first enzymatic step in heme biosynthesis, the condensation of glycine with succinyl-CoA to produce 5-aminolevulinate (ALA) in the mitochondrial matrix. The sequence is that of Mitochondrial glycine transporter from Chaetomium globosum (strain ATCC 6205 / CBS 148.51 / DSM 1962 / NBRC 6347 / NRRL 1970) (Soil fungus).